A 205-amino-acid chain; its full sequence is Ribosomal RNA large subunit methyltransferase E (205 aa).

S-adenosyl-L-methionine contacts are provided by G60, W62, D80, D96, and D121. The active-site Proton acceptor is the K161.

This sequence belongs to the class I-like SAM-binding methyltransferase superfamily. RNA methyltransferase RlmE family.

It localises to the cytoplasm. The catalysed reaction is uridine(2552) in 23S rRNA + S-adenosyl-L-methionine = 2'-O-methyluridine(2552) in 23S rRNA + S-adenosyl-L-homocysteine + H(+). Specifically methylates the uridine in position 2552 of 23S rRNA at the 2'-O position of the ribose in the fully assembled 50S ribosomal subunit. The protein is Ribosomal RNA large subunit methyltransferase E of Chromobacterium violaceum (strain ATCC 12472 / DSM 30191 / JCM 1249 / CCUG 213 / NBRC 12614 / NCIMB 9131 / NCTC 9757 / MK).